The sequence spans 1404 residues: DNA-directed RNA polymerase subunit beta' (1404 aa).

Zn(2+)-binding residues include C70, C72, C85, and C88. D460, D462, and D464 together coordinate Mg(2+). 4 residues coordinate Zn(2+): C825, C899, C906, and C909.

Belongs to the RNA polymerase beta' chain family. The RNAP catalytic core consists of 2 alpha, 1 beta, 1 beta' and 1 omega subunit. When a sigma factor is associated with the core the holoenzyme is formed, which can initiate transcription. Requires Mg(2+) as cofactor. It depends on Zn(2+) as a cofactor.

It catalyses the reaction RNA(n) + a ribonucleoside 5'-triphosphate = RNA(n+1) + diphosphate. DNA-dependent RNA polymerase catalyzes the transcription of DNA into RNA using the four ribonucleoside triphosphates as substrates. The sequence is that of DNA-directed RNA polymerase subunit beta' from Nitrosomonas europaea (strain ATCC 19718 / CIP 103999 / KCTC 2705 / NBRC 14298).